The sequence spans 260 residues: Pyridoxine 5'-phosphate synthase (260 aa).

A 3-amino-2-oxopropyl phosphate-binding site is contributed by Asn-15. 17 to 18 (DH) provides a ligand contact to 1-deoxy-D-xylulose 5-phosphate. Arg-26 is a binding site for 3-amino-2-oxopropyl phosphate. His-51 functions as the Proton acceptor in the catalytic mechanism. Residues Arg-53 and His-58 each coordinate 1-deoxy-D-xylulose 5-phosphate. The active-site Proton acceptor is Glu-78. Thr-108 is a binding site for 1-deoxy-D-xylulose 5-phosphate. His-199 acts as the Proton donor in catalysis. 3-amino-2-oxopropyl phosphate-binding positions include Gly-200 and 221–222 (GH).

The protein belongs to the PNP synthase family. In terms of assembly, homooctamer; tetramer of dimers.

The protein resides in the cytoplasm. The catalysed reaction is 3-amino-2-oxopropyl phosphate + 1-deoxy-D-xylulose 5-phosphate = pyridoxine 5'-phosphate + phosphate + 2 H2O + H(+). Its pathway is cofactor biosynthesis; pyridoxine 5'-phosphate biosynthesis; pyridoxine 5'-phosphate from D-erythrose 4-phosphate: step 5/5. Functionally, catalyzes the complicated ring closure reaction between the two acyclic compounds 1-deoxy-D-xylulose-5-phosphate (DXP) and 3-amino-2-oxopropyl phosphate (1-amino-acetone-3-phosphate or AAP) to form pyridoxine 5'-phosphate (PNP) and inorganic phosphate. The protein is Pyridoxine 5'-phosphate synthase of Cupriavidus pinatubonensis (strain JMP 134 / LMG 1197) (Cupriavidus necator (strain JMP 134)).